The sequence spans 390 residues: Probable protein phosphatase 2C 30 (390 aa).

The segment covering 1-10 (MQLSKNPIKQ) has biased composition (polar residues). Disordered regions lie at residues 1 to 20 (MQLS…NYTD) and 40 to 85 (PPLV…DSET). A compositionally biased stretch (low complexity) spans 44-61 (FSPTSVKTPLSSPRSSPP). Positions 128 to 385 (YYSVYCKRGR…DDISLIIIQL (258 aa)) constitute a PPM-type phosphatase domain. The Mn(2+) site is built by Asp166, Gly167, Asp331, and Asp376.

Belongs to the PP2C family. Mg(2+) serves as cofactor. The cofactor is Mn(2+).

It carries out the reaction O-phospho-L-seryl-[protein] + H2O = L-seryl-[protein] + phosphate. The enzyme catalyses O-phospho-L-threonyl-[protein] + H2O = L-threonyl-[protein] + phosphate. This chain is Probable protein phosphatase 2C 30 (PP2C5), found in Arabidopsis thaliana (Mouse-ear cress).